The primary structure comprises 697 residues: Elongation factor G (697 aa).

One can recognise a tr-type G domain in the interval 6–281; sequence ENIRNIGICA…AVVDYLPSPI (276 aa). GTP contacts are provided by residues 15 to 22, 79 to 83, and 133 to 136; these read AHIDAGKT, DTPGH, and NKMD.

It belongs to the TRAFAC class translation factor GTPase superfamily. Classic translation factor GTPase family. EF-G/EF-2 subfamily.

The protein resides in the cytoplasm. Catalyzes the GTP-dependent ribosomal translocation step during translation elongation. During this step, the ribosome changes from the pre-translocational (PRE) to the post-translocational (POST) state as the newly formed A-site-bound peptidyl-tRNA and P-site-bound deacylated tRNA move to the P and E sites, respectively. Catalyzes the coordinated movement of the two tRNA molecules, the mRNA and conformational changes in the ribosome. In Rickettsia bellii (strain OSU 85-389), this protein is Elongation factor G.